We begin with the raw amino-acid sequence, 292 residues long: Geranyl diphosphate 2-C-methyltransferase (292 aa).

The protein belongs to the geranyl diphosphate 2-C-methyltransferase family. Mg(2+) is required as a cofactor.

It carries out the reaction (2E)-geranyl diphosphate + S-adenosyl-L-methionine = (E)-2-methylgeranyl diphosphate + S-adenosyl-L-homocysteine + H(+). In terms of biological role, catalyzes the SAM-dependent methylation of geranyl diphosphate (GPP) to yield (E)-2-methylgeranyl diphosphate (2-MeGPP). The sequence is that of Geranyl diphosphate 2-C-methyltransferase from Streptomyces coelicolor (strain ATCC BAA-471 / A3(2) / M145).